A 483-amino-acid polypeptide reads, in one-letter code: Kynureninase 1 (483 aa).

Pyridoxal 5'-phosphate is bound by residues L147, T148, 175–178 (FPSD), S232, D261, H264, and Y286. Residue K287 is modified to N6-(pyridoxal phosphate)lysine. Pyridoxal 5'-phosphate contacts are provided by W326 and N354.

This sequence belongs to the kynureninase family. In terms of assembly, homodimer. Requires pyridoxal 5'-phosphate as cofactor.

The protein localises to the cytoplasm. It carries out the reaction L-kynurenine + H2O = anthranilate + L-alanine + H(+). It catalyses the reaction 3-hydroxy-L-kynurenine + H2O = 3-hydroxyanthranilate + L-alanine + H(+). The protein operates within amino-acid degradation; L-kynurenine degradation; L-alanine and anthranilate from L-kynurenine: step 1/1. Its pathway is cofactor biosynthesis; NAD(+) biosynthesis; quinolinate from L-kynurenine: step 2/3. In terms of biological role, catalyzes the cleavage of L-kynurenine (L-Kyn) and L-3-hydroxykynurenine (L-3OHKyn) into anthranilic acid (AA) and 3-hydroxyanthranilic acid (3-OHAA), respectively. The chain is Kynureninase 1 (bna5-1) from Aspergillus terreus (strain NIH 2624 / FGSC A1156).